The following is a 419-amino-acid chain: Creatine kinase S-type, mitochondrial (419 aa).

The transit peptide at 1 to 39 directs the protein to the mitochondrion; that stretch reads MASTFSKLLTGRNASLLFATLGTSALTTGYLVNRQKVCA. The interval 40-64 is cardiolipin-binding; it reads EARDQHKLFPPSADYPDLRKHNNCM. One can recognise a Phosphagen kinase N-terminal domain in the interval 46–132; the sequence is KLFPPSADYP…FDPVIKLRHN (87 aa). A Phosphagen kinase C-terminal domain is found at 159 to 401; sequence YVLSSRVRTG…NYLVDCEKKL (243 aa). ATP-binding positions include 162–166 and H225; that span reads SSRVR. A Phosphotyrosine modification is found at Y255. ATP contacts are provided by residues R270, R326, 354–359, and D369; that span reads RGTGGV. T356 is subject to Phosphothreonine.

Belongs to the ATP:guanido phosphotransferase family. Exists as an octamer composed of four CKMT2 homodimers.

The protein localises to the mitochondrion inner membrane. The enzyme catalyses creatine + ATP = N-phosphocreatine + ADP + H(+). Functionally, reversibly catalyzes the transfer of phosphate between ATP and various phosphogens (e.g. creatine phosphate). Creatine kinase isoenzymes play a central role in energy transduction in tissues with large, fluctuating energy demands, such as skeletal muscle, heart, brain and spermatozoa. The chain is Creatine kinase S-type, mitochondrial (CKMT2) from Oryctolagus cuniculus (Rabbit).